Consider the following 263-residue polypeptide: 4-hydroxy-tetrahydrodipicolinate reductase (263 aa).

NAD(+) is bound by residues Gly7 to Met12, Gly96 to Thr98, and Ala122 to Phe125. Residue His152 is the Proton donor/acceptor of the active site. His153 serves as a coordination point for (S)-2,3,4,5-tetrahydrodipicolinate. Residue Lys156 is the Proton donor of the active site. Residue Gly162 to Thr163 coordinates (S)-2,3,4,5-tetrahydrodipicolinate.

The protein belongs to the DapB family.

The protein resides in the cytoplasm. The catalysed reaction is (S)-2,3,4,5-tetrahydrodipicolinate + NAD(+) + H2O = (2S,4S)-4-hydroxy-2,3,4,5-tetrahydrodipicolinate + NADH + H(+). The enzyme catalyses (S)-2,3,4,5-tetrahydrodipicolinate + NADP(+) + H2O = (2S,4S)-4-hydroxy-2,3,4,5-tetrahydrodipicolinate + NADPH + H(+). It functions in the pathway amino-acid biosynthesis; L-lysine biosynthesis via DAP pathway; (S)-tetrahydrodipicolinate from L-aspartate: step 4/4. Its function is as follows. Catalyzes the conversion of 4-hydroxy-tetrahydrodipicolinate (HTPA) to tetrahydrodipicolinate. The polypeptide is 4-hydroxy-tetrahydrodipicolinate reductase (Listeria monocytogenes serotype 4b (strain F2365)).